A 317-amino-acid chain; its full sequence is MTDKLTSLRQITTVVADTGDIAAMKLYQPQDATTNPSIILNAAQIPEYRKLIDEAITWAREQSSDHAQQIVDATDKLAVNIGLEILKLIPGRISTEVDARLSYDTVASVAKAKRLIKLYNEAGISNDRILIKLASTWQGIRAAEQLEKEGINCNLTLLFSFAQARACAEAGVFLISPFVGRILDWYKANGDQKEFAPSEDPGVVSVTEIYQYYKKHGYKTVVMGASFRNLGEIIELAGCDRLTIAPSLLKELAESEGPVERKLAYTGEIQAKPAPLTEAEFYWQHNQDPMAVDKLADGIRKFAIDQGKLEKMISDLL.

Lys132 serves as the catalytic Schiff-base intermediate with substrate.

This sequence belongs to the transaldolase family. Type 1 subfamily. Homodimer.

The protein localises to the cytoplasm. It carries out the reaction D-sedoheptulose 7-phosphate + D-glyceraldehyde 3-phosphate = D-erythrose 4-phosphate + beta-D-fructose 6-phosphate. It participates in carbohydrate degradation; pentose phosphate pathway; D-glyceraldehyde 3-phosphate and beta-D-fructose 6-phosphate from D-ribose 5-phosphate and D-xylulose 5-phosphate (non-oxidative stage): step 2/3. Transaldolase is important for the balance of metabolites in the pentose-phosphate pathway. This Yersinia pseudotuberculosis serotype O:3 (strain YPIII) protein is Transaldolase.